We begin with the raw amino-acid sequence, 1236 residues long: DNA-directed RNA polymerase subunit beta (1236 aa).

Residues 1193–1212 (PDVLDDDSYDQNNDEDIDEI) are disordered. Residues 1194–1212 (DVLDDDSYDQNNDEDIDEI) show a composition bias toward acidic residues.

This sequence belongs to the RNA polymerase beta chain family. In terms of assembly, the RNAP catalytic core consists of 2 alpha, 1 beta, 1 beta' and 1 omega subunit. When a sigma factor is associated with the core the holoenzyme is formed, which can initiate transcription.

The enzyme catalyses RNA(n) + a ribonucleoside 5'-triphosphate = RNA(n+1) + diphosphate. In terms of biological role, DNA-dependent RNA polymerase catalyzes the transcription of DNA into RNA using the four ribonucleoside triphosphates as substrates. This Clostridium beijerinckii (strain ATCC 51743 / NCIMB 8052) (Clostridium acetobutylicum) protein is DNA-directed RNA polymerase subunit beta.